The chain runs to 395 residues: 1-deoxy-D-xylulose 5-phosphate reductoisomerase (395 aa).

The NADPH site is built by Thr-10, Gly-11, Ser-12, Ile-13, and Asn-123. Residue Lys-124 participates in 1-deoxy-D-xylulose 5-phosphate binding. Residue Glu-125 coordinates NADPH. Asp-149 provides a ligand contact to Mn(2+). 1-deoxy-D-xylulose 5-phosphate is bound by residues Ser-150, Glu-151, Ser-185, and His-208. Mn(2+) is bound at residue Glu-151. Residue Gly-214 coordinates NADPH. 1-deoxy-D-xylulose 5-phosphate is bound by residues Ser-221, Asn-226, Lys-227, and Glu-230. A Mn(2+)-binding site is contributed by Glu-230.

Belongs to the DXR family. Mg(2+) is required as a cofactor. The cofactor is Mn(2+).

The catalysed reaction is 2-C-methyl-D-erythritol 4-phosphate + NADP(+) = 1-deoxy-D-xylulose 5-phosphate + NADPH + H(+). It participates in isoprenoid biosynthesis; isopentenyl diphosphate biosynthesis via DXP pathway; isopentenyl diphosphate from 1-deoxy-D-xylulose 5-phosphate: step 1/6. In terms of biological role, catalyzes the NADPH-dependent rearrangement and reduction of 1-deoxy-D-xylulose-5-phosphate (DXP) to 2-C-methyl-D-erythritol 4-phosphate (MEP). The protein is 1-deoxy-D-xylulose 5-phosphate reductoisomerase of Shewanella sediminis (strain HAW-EB3).